Here is a 322-residue protein sequence, read N- to C-terminus: Protease HtpX homolog (322 aa).

The next 2 membrane-spanning stretches (helical) occupy residues 19–39 and 61–81; these read ILLI…CYLL and FINL…IAYF. Zn(2+) is bound at residue histidine 165. Glutamate 166 is a catalytic residue. Zn(2+) is bound at residue histidine 169. 2 consecutive transmembrane segments (helical) span residues 175–195 and 216–236; these read VRLL…AQIA and ILIL…ATLM. Glutamate 245 lines the Zn(2+) pocket.

This sequence belongs to the peptidase M48B family. Zn(2+) serves as cofactor.

It is found in the cell inner membrane. This is Protease HtpX homolog from Bacteroides fragilis (strain YCH46).